A 442-amino-acid polypeptide reads, in one-letter code: MSAEPNNNQAKADVPEEVVEPKPTTVEEPKSTTVEEPKSTTVEESKSTTVEEPKSTTAEQPKSTIEQDPKPSTTESSPVQIDDSTPIPQITTEEPKPTVAEPSTTESVTAEPTTEQPQEAAVKLESVKEADAEAAAKLEATKDADVEKAASTSQHSVSFDKATKTHDGSPLSKFYSELPAILEAAEYNEMWGIVLDPSETHVQTSIVLEKFLRANAKDVPKAKAQLIEALKWRKTMQPQKLLESTEFDKVKFGNLGYVTSYNTTEGGKEVITWNIYGAVKDVKKTFSDVPEFLKWRAALMELSIKELDLASATEKIPENGPDPYRMIQVHDYLNVSFLRMDPSIRAASKETIQTFSMAYPELLKEKFFVNVPLVMGWVFTAMKIFLSADTIKKFHPLSYGSNLGSEIPNVAEQLPKEYGGKGGELKSGLTVKYSEGEASKTA.

Residues 1–10 (MSAEPNNNQA) show a composition bias toward polar residues. Disordered stretches follow at residues 1–119 (MSAE…QPQE) and 141–170 (TKDA…DGSP). The span at 25-54 (TVEEPKSTTVEEPKSTTVEESKSTTVEEPK) shows a compositional bias: basic and acidic residues. Polar residues-rich tracts occupy residues 58–92 (AEQP…QITT) and 101–117 (EPST…TEQP). The region spanning 251–426 (KFGNLGYVTS…EYGGKGGELK (176 aa)) is the CRAL-TRIO domain. The heme site is built by Tyr276, Arg296, His330, Tyr332, and Lys366.

The protein belongs to the SFH5 family. The cofactor is heme b.

The protein localises to the cytoplasm. The protein resides in the endoplasmic reticulum membrane. It localises to the microsome membrane. The catalysed reaction is a 1,2-diacyl-sn-glycero-3-phospho-(1D-myo-inositol)(in) = a 1,2-diacyl-sn-glycero-3-phospho-(1D-myo-inositol)(out). Non-classical phosphatidylinositol (PtdIns) transfer protein (PITP), which exhibits PtdIns-binding/transfer activity in the absence of detectable PtdCho-binding/transfer activity. Regulates PtdIns(4,5)P2 homeostasis at the plasma membrane. Heme-binding protein that may play a role in organic oxidant-induced stress responses. This Botryotinia fuckeliana (strain B05.10) (Noble rot fungus) protein is Phosphatidylinositol transfer protein sfh5 (sfh5).